A 226-amino-acid chain; its full sequence is PKHD-type hydroxylase BP3529 (226 aa).

The 101-residue stretch at 78–178 folds into the Fe2OG dioxygenase domain; it reads KIFPPLFNRY…RISAFFWLQS (101 aa). Positions 96, 98, and 159 each coordinate Fe cation. R169 contributes to the 2-oxoglutarate binding site.

Requires Fe(2+) as cofactor. L-ascorbate serves as cofactor.

In Bordetella pertussis (strain Tohama I / ATCC BAA-589 / NCTC 13251), this protein is PKHD-type hydroxylase BP3529.